The sequence spans 22 residues: Brevinin-1OKd (22 aa).

K22 bears the Lysine amide mark.

As to expression, expressed by the skin glands.

Its subcellular location is the secreted. In terms of biological role, antimicrobial peptide. The sequence is that of Brevinin-1OKd from Nidirana okinavana (Kampira Falls frog).